A 375-amino-acid chain; its full sequence is Acetylornithine aminotransferase (375 aa).

Pyridoxal 5'-phosphate-binding positions include 93–94 (GT) and F120. Position 123 (R123) interacts with N(2)-acetyl-L-ornithine. 205–208 (DEVQ) is a binding site for pyridoxal 5'-phosphate. Position 234 is an N6-(pyridoxal phosphate)lysine (K234). T262 is a binding site for N(2)-acetyl-L-ornithine. T263 contributes to the pyridoxal 5'-phosphate binding site.

This sequence belongs to the class-III pyridoxal-phosphate-dependent aminotransferase family. ArgD subfamily. In terms of assembly, homodimer. The cofactor is pyridoxal 5'-phosphate.

It localises to the cytoplasm. It catalyses the reaction N(2)-acetyl-L-ornithine + 2-oxoglutarate = N-acetyl-L-glutamate 5-semialdehyde + L-glutamate. Its pathway is amino-acid biosynthesis; L-arginine biosynthesis; N(2)-acetyl-L-ornithine from L-glutamate: step 4/4. In Staphylococcus epidermidis (strain ATCC 35984 / DSM 28319 / BCRC 17069 / CCUG 31568 / BM 3577 / RP62A), this protein is Acetylornithine aminotransferase.